The chain runs to 539 residues: GMP synthase [glutamine-hydrolyzing] (539 aa).

One can recognise a Glutamine amidotransferase type-1 domain in the interval 4 to 202 (KILILDFGSQ…VLQIAGAKPD (199 aa)). Cysteine 81 serves as the catalytic Nucleophile. Residues histidine 176 and glutamate 178 contribute to the active site. The GMPS ATP-PPase domain occupies 203–395 (WIMKNHIEEA…LGLPPEMVYR (193 aa)). Residue 230–236 (SGGVDSS) coordinates ATP.

Homodimer.

The enzyme catalyses XMP + L-glutamine + ATP + H2O = GMP + L-glutamate + AMP + diphosphate + 2 H(+). It participates in purine metabolism; GMP biosynthesis; GMP from XMP (L-Gln route): step 1/1. Its function is as follows. Catalyzes the synthesis of GMP from XMP. This chain is GMP synthase [glutamine-hydrolyzing], found in Burkholderia cenocepacia (strain ATCC BAA-245 / DSM 16553 / LMG 16656 / NCTC 13227 / J2315 / CF5610) (Burkholderia cepacia (strain J2315)).